A 237-amino-acid polypeptide reads, in one-letter code: uncharacterized protein (237 aa).

A signal peptide (tat-type signal) is located at residues 1 to 25 (MRHIFQRLLPRRLWLAGLPCLALLG). A disordered region spans residues 201–237 (IERQLSTRKPAGNFSPDTPHESEKPAPSTHEVTPDEP).

In terms of processing, exported by the Tat system. The position of the signal peptide cleavage has not been experimentally proven. Can also be exported by the Sec system.

This is an uncharacterized protein from Escherichia coli (strain K12).